We begin with the raw amino-acid sequence, 656 residues long: L-type lectin-domain containing receptor kinase S.1 (656 aa).

The signal sequence occupies residues 1–29; sequence MSWQWRRRQWPSPLLLILIVLHLVSSSSA. A legume-lectin like region spans residues 30–273; sequence IDFLYNSFSS…ARRILAWSLS (244 aa). Over 30 to 304 the chain is Extracellular; it reads IDFLYNSFSS…SSSLSTGAIA (275 aa). N-linked (GlcNAc...) asparagine glycosylation is found at Asn42, Asn63, Asn121, Asn139, Asn191, Asn219, Asn282, and Asn293. Residues 305–325 traverse the membrane as a helical segment; sequence GIVIGCVVFVALIGFGGYLIW. Over 326 to 656 the chain is Cytoplasmic; that stretch reads KKLMREEEEE…AAADSTAAHA (331 aa). Positions 361 to 639 constitute a Protein kinase domain; it reads FSNDRLLGSG…LLGSPQEDLL (279 aa). ATP contacts are provided by residues 367 to 375 and Lys389; that span reads LGSGGFGKV. Asp485 acts as the Proton acceptor in catalysis.

It in the C-terminal section; belongs to the protein kinase superfamily. Ser/Thr protein kinase family. In the N-terminal section; belongs to the leguminous lectin family.

Its subcellular location is the cell membrane. It catalyses the reaction L-seryl-[protein] + ATP = O-phospho-L-seryl-[protein] + ADP + H(+). The catalysed reaction is L-threonyl-[protein] + ATP = O-phospho-L-threonyl-[protein] + ADP + H(+). Its function is as follows. Involved in resistance response to the pathogenic oomycetes Phytophthora infestans and Phytophthora capsici and to the pathogenic bacteria Pseudomonas syringae. This Arabidopsis thaliana (Mouse-ear cress) protein is L-type lectin-domain containing receptor kinase S.1.